The primary structure comprises 486 residues: E3 ubiquitin-protein ligase TRIM58 (486 aa).

Residues 16 to 61 form an RING-type zinc finger; sequence CPVCLDFLQEPVSVDCGHSFCLRCISEFCEKSDGAQGGVYACPQCR. A B box-type zinc finger spans residues 91 to 132; sequence PGARRCARHGEDLSRFCEEDEAALCWVCDAGPEHRTHRTAPL. Residues C96, H99, C118, and H124 each coordinate Zn(2+). The stretch at 193 to 242 forms a coiled coil; it reads LAQEEQRQLRRLEAEERATLQRLRESKSRLVQQSKALKELADELQERCQR. The 191-residue stretch at 273–463 folds into the B30.2/SPRY domain; that stretch reads LKTACCIPGR…TPLILPPTTI (191 aa).

The protein belongs to the TRIM/RBCC family. As to expression, expressed in erythroblasts.

The enzyme catalyses S-ubiquitinyl-[E2 ubiquitin-conjugating enzyme]-L-cysteine + [acceptor protein]-L-lysine = [E2 ubiquitin-conjugating enzyme]-L-cysteine + N(6)-ubiquitinyl-[acceptor protein]-L-lysine.. It participates in protein modification; protein ubiquitination. E3 ubiquitin ligase induced during late erythropoiesis. Directly binds and ubiquitinates the intermediate chain of the microtubule motor dynein (DYNC1LI1/DYNC1LI2), stimulating the degradation of the dynein holoprotein complex. May participate in the erythroblast enucleation process through regulation of nuclear polarization. This chain is E3 ubiquitin-protein ligase TRIM58 (TRIM58), found in Homo sapiens (Human).